The primary structure comprises 188 residues: Putative manganese efflux pump MntP (188 aa).

The next 6 membrane-spanning stretches (helical) occupy residues 3–23 (FYAL…VALA), 35–55 (IAAT…AGWV), 63–83 (FISE…GLKM), 107–127 (VLTA…LAFM), 131–151 (IAFA…VGLA), and 167–187 (AGGL…LGLI).

It belongs to the MntP (TC 9.B.29) family.

It is found in the cell inner membrane. Functionally, probably functions as a manganese efflux pump. The protein is Putative manganese efflux pump MntP of Neisseria meningitidis serogroup A / serotype 4A (strain DSM 15465 / Z2491).